We begin with the raw amino-acid sequence, 98 residues long: Co-chaperonin GroES (98 aa).

Belongs to the GroES chaperonin family. Heptamer of 7 subunits arranged in a ring. Interacts with the chaperonin GroEL.

The protein resides in the cytoplasm. Its function is as follows. Together with the chaperonin GroEL, plays an essential role in assisting protein folding. The GroEL-GroES system forms a nano-cage that allows encapsulation of the non-native substrate proteins and provides a physical environment optimized to promote and accelerate protein folding. GroES binds to the apical surface of the GroEL ring, thereby capping the opening of the GroEL channel. The sequence is that of Co-chaperonin GroES from Brucella abortus (strain S19).